Reading from the N-terminus, the 179-residue chain is MSRVGKRIIQIPSGTEVKIDGSFFEVKGKLGSLSRLFSPFVNIKHENNQISVERLNELKPTKQLHGTTNALIANMVKGVSEGFKKELKIEGVGYKATLKGQNLELAAGYSHPVSLVIPKDLKVEVPKPVNIIISGIDKQVVGEFAAKVRGVRPPSVYSGKGIQYKDEKLRRKEGKKASK.

It belongs to the universal ribosomal protein uL6 family. As to quaternary structure, part of the 50S ribosomal subunit.

Its function is as follows. This protein binds to the 23S rRNA, and is important in its secondary structure. It is located near the subunit interface in the base of the L7/L12 stalk, and near the tRNA binding site of the peptidyltransferase center. In Mycoplasmopsis pulmonis (strain UAB CTIP) (Mycoplasma pulmonis), this protein is Large ribosomal subunit protein uL6.